We begin with the raw amino-acid sequence, 893 residues long: 26S proteasome non-ATPase regulatory subunit 2 (893 aa).

A disordered region spans residues 1–59; the sequence is MPQKEVTIPVPAKGGSNKEEDKKDNKDTEEKNTTTNTTTKDNKKDKKKDKKEETLSPED. 2 stretches are compositionally biased toward basic and acidic residues: residues 16 to 32 and 40 to 59; these read SNKE…EEKN and KDNK…SPED. PC repeat units follow at residues 412–445, 446–482, 483–517, 522–555, 562–583, 666–700, and 701–735; these read STVA…HCSN, GALM…GTRI, SAIF…KMEF, GLAL…ASES, LGLG…ETLK, AIPL…EVAQ, and GAIL…DVHL.

It belongs to the proteasome subunit S2 family.

In terms of biological role, acts as a regulatory subunit of the 26 proteasome which is involved in the ATP-dependent degradation of ubiquitinated proteins. This chain is 26S proteasome non-ATPase regulatory subunit 2 (psmD2), found in Dictyostelium discoideum (Social amoeba).